We begin with the raw amino-acid sequence, 936 residues long: Protein NNF2 (936 aa).

At 1 to 41 the chain is on the lumenal side; the sequence is MEEQFTNQKKVSHLQSLMNTKRSEQPTEFAKKHRFKDTLAL. A Glycyl lysine isopeptide (Lys-Gly) (interchain with G-Cter in ubiquitin) cross-link involves residue Lys10. A helical transmembrane segment spans residues 42–62; that stretch reads FLVFLSFNHFTSLCLLVSFIV. Residues 63-120 lie on the Cytoplasmic side of the membrane; it reads ATKCKDFLANCFIILFLSKKPSRHIGEVAHIDISTSKVTNGSSNRKSNSRFFGNSKNS. Residues 121–141 traverse the membrane as a helical segment; the sequence is FVIPIPVLICEILFAMLLKIY. Topologically, residues 142-245 are lumenal; that stretch reads GGDYFVKPIK…FKMLGKHSDS (104 aa). Residues 246–266 traverse the membrane as a helical segment; sequence MIYYLSFHILFFSFASSLLHP. The Cytoplasmic portion of the chain corresponds to 267–936; it reads HRQTAENKPL…NIHSLIGNSY (670 aa). Disordered regions lie at residues 297-351, 387-437, and 512-533; these read RISS…SNIL, GSNS…DFFS, and TSEN…QEKH. The segment covering 299 to 308 has biased composition (low complexity); that stretch reads SSSSSVSADS. Positions 325–351 are enriched in polar residues; the sequence is LSSSNQTIHPSQQNNSPVPLSSHSNIL. 2 stretches are compositionally biased toward low complexity: residues 394–405 and 414–428; these read TTTTSTTTSPTT and SLSN…SNGN. Residues 512-529 show a composition bias toward polar residues; sequence TSENSLTPTNSNTSYVSN.

The protein localises to the endoplasmic reticulum membrane. In Saccharomyces cerevisiae (strain ATCC 204508 / S288c) (Baker's yeast), this protein is Protein NNF2 (NNF2).